The primary structure comprises 247 residues: ATP synthase subunit a, chloroplastic (247 aa).

Transmembrane regions (helical) follow at residues 38 to 58 (QVLI…ALAV), 95 to 115 (VPFI…GALL), 134 to 154 (INTT…AGLT), 199 to 219 (LVVV…VMFL), and 220 to 240 (GLFT…AYIG).

This sequence belongs to the ATPase A chain family. F-type ATPases have 2 components, CF(1) - the catalytic core - and CF(0) - the membrane proton channel. CF(1) has five subunits: alpha(3), beta(3), gamma(1), delta(1), epsilon(1). CF(0) has four main subunits: a, b, b' and c.

The protein resides in the plastid. It localises to the chloroplast thylakoid membrane. In terms of biological role, key component of the proton channel; it plays a direct role in the translocation of protons across the membrane. This chain is ATP synthase subunit a, chloroplastic, found in Helianthus annuus (Common sunflower).